A 460-amino-acid chain; its full sequence is tRNA hydroxylation protein P (460 aa).

The protein belongs to the peptidase U32 family.

In terms of biological role, involved in prephenate-dependent formation of 5-hydroxyuridine (ho5U) modification at position 34 in tRNAs, the first step in 5-carboxymethoxyuridine (cmo5U) biosynthesis. This chain is tRNA hydroxylation protein P, found in Haemophilus influenzae (strain ATCC 51907 / DSM 11121 / KW20 / Rd).